Here is a 104-residue protein sequence, read N- to C-terminus: L-rhamnose mutarotase (104 aa).

Y18 serves as a coordination point for substrate. The active-site Proton donor is H22. Residues Y41 and 76–77 each bind substrate; that span reads WW.

The protein belongs to the rhamnose mutarotase family. In terms of assembly, homodimer.

The protein localises to the cytoplasm. The enzyme catalyses alpha-L-rhamnose = beta-L-rhamnose. It participates in carbohydrate metabolism; L-rhamnose metabolism. Involved in the anomeric conversion of L-rhamnose. The sequence is that of L-rhamnose mutarotase from Mannheimia succiniciproducens (strain KCTC 0769BP / MBEL55E).